We begin with the raw amino-acid sequence, 1533 residues long: Glycogen debranching enzyme (1533 aa).

S64 carries the post-translational modification Phosphoserine. Residues D527, H530, and D628 contribute to the active site.

Belongs to the glycogen debranching enzyme family. In terms of assembly, monomer. Interacts with NHLRC1/malin. In terms of processing, ubiquitinated.

It localises to the cytoplasm. It catalyses the reaction Transfers a segment of a (1-&gt;4)-alpha-D-glucan to a new position in an acceptor, which may be glucose or a (1-&gt;4)-alpha-D-glucan.. It carries out the reaction Hydrolysis of (1-&gt;6)-alpha-D-glucosidic branch linkages in glycogen phosphorylase limit dextrin.. Functionally, multifunctional enzyme acting as 1,4-alpha-D-glucan:1,4-alpha-D-glucan 4-alpha-D-glycosyltransferase and amylo-1,6-glucosidase in glycogen degradation. The sequence is that of Glycogen debranching enzyme (AGL) from Canis lupus familiaris (Dog).